Reading from the N-terminus, the 177-residue chain is Insertion element IS1223 uncharacterized 20.7 kDa protein (177 aa).

A disordered region spans residues 112-131 (KQKGRPRKVPKKSKKTTKKL). Positions 113–128 (QKGRPRKVPKKSKKTT) are enriched in basic residues.

This sequence belongs to the IS150/IS1296 orfA family.

This Lactobacillus johnsonii protein is Insertion element IS1223 uncharacterized 20.7 kDa protein.